The sequence spans 171 residues: 3-hydroxydecanoyl-[acyl-carrier-protein] dehydratase (171 aa).

His-70 is an active-site residue.

It belongs to the thioester dehydratase family. FabA subfamily. As to quaternary structure, homodimer.

The protein localises to the cytoplasm. It carries out the reaction a (3R)-hydroxyacyl-[ACP] = a (2E)-enoyl-[ACP] + H2O. The enzyme catalyses (3R)-hydroxydecanoyl-[ACP] = (2E)-decenoyl-[ACP] + H2O. It catalyses the reaction (2E)-decenoyl-[ACP] = (3Z)-decenoyl-[ACP]. It functions in the pathway lipid metabolism; fatty acid biosynthesis. Functionally, necessary for the introduction of cis unsaturation into fatty acids. Catalyzes the dehydration of (3R)-3-hydroxydecanoyl-ACP to E-(2)-decenoyl-ACP and then its isomerization to Z-(3)-decenoyl-ACP. Can catalyze the dehydratase reaction for beta-hydroxyacyl-ACPs with saturated chain lengths up to 16:0, being most active on intermediate chain length. The sequence is that of 3-hydroxydecanoyl-[acyl-carrier-protein] dehydratase from Shewanella frigidimarina (strain NCIMB 400).